Here is a 467-residue protein sequence, read N- to C-terminus: ATP synthase subunit beta (467 aa).

An ATP-binding site is contributed by 156 to 163 (GGAGVGKT).

It belongs to the ATPase alpha/beta chains family. F-type ATPases have 2 components, CF(1) - the catalytic core - and CF(0) - the membrane proton channel. CF(1) has five subunits: alpha(3), beta(3), gamma(1), delta(1), epsilon(1). CF(0) has three main subunits: a(1), b(2) and c(9-12). The alpha and beta chains form an alternating ring which encloses part of the gamma chain. CF(1) is attached to CF(0) by a central stalk formed by the gamma and epsilon chains, while a peripheral stalk is formed by the delta and b chains.

Its subcellular location is the cell inner membrane. It carries out the reaction ATP + H2O + 4 H(+)(in) = ADP + phosphate + 5 H(+)(out). Functionally, produces ATP from ADP in the presence of a proton gradient across the membrane. The catalytic sites are hosted primarily by the beta subunits. The polypeptide is ATP synthase subunit beta (Cupriavidus taiwanensis (strain DSM 17343 / BCRC 17206 / CCUG 44338 / CIP 107171 / LMG 19424 / R1) (Ralstonia taiwanensis (strain LMG 19424))).